Here is a 217-residue protein sequence, read N- to C-terminus: Ras-related protein Rab-19 (217 aa).

GTP-binding residues include Ser-26, Val-28, Gly-29, Lys-30, Thr-31, Cys-32, Tyr-42, Ser-43, Glu-44, Ser-45, and Thr-49. Thr-31 is a binding site for Mg(2+). A Switch 1 motif is present at residues 39–54; sequence SGVYSESQQNTIGVDF. The Mg(2+) site is built by Thr-49 and Asp-72. A Switch 2 motif is present at residues 74–89; that stretch reads AGQERFRTITQSYYRS. 7 residues coordinate GTP: Gly-75, Asn-130, Lys-131, Asp-133, Ser-161, Ala-162, and Lys-163. Residues Cys-215 and Cys-217 are each lipidated (S-geranylgeranyl cysteine). The residue at position 217 (Cys-217) is a Cysteine methyl ester.

This sequence belongs to the small GTPase superfamily. Rab family. Requires Mg(2+) as cofactor. As to expression, expressed in a tissue-specific manner. Detected at high levels in intestine, lung and spleen, and at a lower level in kidney.

The protein resides in the cell membrane. The catalysed reaction is GTP + H2O = GDP + phosphate + H(+). With respect to regulation, regulated by guanine nucleotide exchange factors (GEFs) which promote the exchange of bound GDP for free GTP. Regulated by GTPase activating proteins (GAPs) which increase the GTP hydrolysis activity. Inhibited by GDP dissociation inhibitors (GDIs). Functionally, the small GTPases Rab are key regulators of intracellular membrane trafficking, from the formation of transport vesicles to their fusion with membranes. Rabs cycle between an inactive GDP-bound form and an active GTP-bound form that is able to recruit to membranes different set of downstream effectors directly responsible for vesicle formation, movement, tethering and fusion. In Mus musculus (Mouse), this protein is Ras-related protein Rab-19.